A 449-amino-acid polypeptide reads, in one-letter code: Exodeoxyribonuclease 7 large subunit (449 aa).

It belongs to the XseA family. As to quaternary structure, heterooligomer composed of large and small subunits.

It localises to the cytoplasm. It catalyses the reaction Exonucleolytic cleavage in either 5'- to 3'- or 3'- to 5'-direction to yield nucleoside 5'-phosphates.. Functionally, bidirectionally degrades single-stranded DNA into large acid-insoluble oligonucleotides, which are then degraded further into small acid-soluble oligonucleotides. In Salmonella typhi, this protein is Exodeoxyribonuclease 7 large subunit.